Here is a 371-residue protein sequence, read N- to C-terminus: MASVQLQNVTKAWGEVVVSKDINLDIHEGEFVVFVGPSGCGKSTLLRMIAGLETITSGDLFIGEKRMNDTPPAERGVGMVFQSYALYPHLSVAENMSFGLKLAGAKKEVINQRVNQVAEVLQLAHLLDRKPKALSGGQRQRVAIGRTLVAEPSVFLLDEPLSNLDAALRVQMRIEISRLHKRLGRTMIYVTHDQVEAMTLADKIVVLDAGRVAQVGKPLELYHYPADRFVAGFIGSPKMNFLPVKVTSTAIDQVQVELPMPNRQQVWLPVESRDVQVGANMSLGIRPEHLLPSDIADVILEGEVQVVEQLGNETQIHIQIPSIRQNLVYRQNDVVLVEEGATFAIGLPPERCHLFREDGTACRRLHKEPGV.

In terms of domain architecture, ABC transporter spans 4–234 (VQLQNVTKAW…PADRFVAGFI (231 aa)). 36-43 (GPSGCGKS) lines the ATP pocket.

It belongs to the ABC transporter superfamily. Maltooligosaccharide importer (TC 3.A.1.1.1) family. As to quaternary structure, the complex is composed of two ATP-binding proteins (MalK), two transmembrane proteins (MalG and MalK) and a solute-binding protein (MalE).

It localises to the cell inner membrane. The catalysed reaction is D-maltose(out) + ATP + H2O = D-maltose(in) + ADP + phosphate + H(+). Part of the ABC transporter complex MalEFGK involved in maltose/maltodextrin import. Responsible for energy coupling to the transport system. The chain is Maltose/maltodextrin import ATP-binding protein MalK from Escherichia coli O6:H1 (strain CFT073 / ATCC 700928 / UPEC).